Consider the following 443-residue polypeptide: MSKLRVMSLFSGIGAFEAALRNIGVDYELIGFSEIDKYAIKSYCAIHNVSETLNVGDISKAKKDNIPYFDLLTSGFPCPTFSVAGGRDGMEYKCSNCSHEHLITYEDYKKGVKCPKCEAVSKAKDERGTLFFETALLAEEKKPKFVILENVKGLINSGNGQVLRIISETMNNIGYRIDLELLNSKFFNVPQNRERVYIIGIREDLVENEQWVVGQKRNDVLSKGKKRLQEINIKSFNFKWPLQDTVTKRLREILEDFVDEKYYLNEEKTKKLVEQLGTAPLQKQEVREPLMVGHVDLKGHDAIKRVYSPEGLSPTLTTMGGGHREPKIAEKQKEVRAVLTPEREEKRQNGRRFKENGEPAFTVNTIDRHGVAIGEYPKYKIRKLSPLECWRLQAFDDEDFEKAFAAGISNSQLYKQAGNSITVSVLESIFQELIHTYVNKESE.

The SAM-dependent MTase C5-type domain occupies 4-440 (LRVMSLFSGI…QELIHTYVNK (437 aa)). Cys78 is an active-site residue.

The protein belongs to the class I-like SAM-binding methyltransferase superfamily. C5-methyltransferase family.

It carries out the reaction a 2'-deoxycytidine in DNA + S-adenosyl-L-methionine = a 5-methyl-2'-deoxycytidine in DNA + S-adenosyl-L-homocysteine + H(+). Its function is as follows. A putative methylase, recognizes the double-stranded sequence 5'-GGCC-3', methylates C-?. There is no known cognate restriction enzyme. The sequence is that of Putative type II methyltransferase M.BsuMIIP (mtbP) from Bacillus subtilis (strain 168).